A 194-amino-acid polypeptide reads, in one-letter code: Small ribosomal subunit protein uS7 (194 aa).

It belongs to the universal ribosomal protein uS7 family. In terms of assembly, part of the 30S ribosomal subunit.

Functionally, one of the primary rRNA binding proteins, it binds directly to 16S rRNA where it nucleates assembly of the head domain of the 30S subunit. Is located at the subunit interface close to the decoding center. This chain is Small ribosomal subunit protein uS7, found in Sulfurisphaera tokodaii (strain DSM 16993 / JCM 10545 / NBRC 100140 / 7) (Sulfolobus tokodaii).